Here is a 494-residue protein sequence, read N- to C-terminus: Guanosine-5'-triphosphate,3'-diphosphate pyrophosphatase (494 aa).

It belongs to the GppA/Ppx family. GppA subfamily.

It carries out the reaction guanosine 3'-diphosphate 5'-triphosphate + H2O = guanosine 3',5'-bis(diphosphate) + phosphate + H(+). Its pathway is purine metabolism; ppGpp biosynthesis; ppGpp from GTP: step 2/2. Catalyzes the conversion of pppGpp to ppGpp. Guanosine pentaphosphate (pppGpp) is a cytoplasmic signaling molecule which together with ppGpp controls the 'stringent response', an adaptive process that allows bacteria to respond to amino acid starvation, resulting in the coordinated regulation of numerous cellular activities. The sequence is that of Guanosine-5'-triphosphate,3'-diphosphate pyrophosphatase from Shigella sonnei (strain Ss046).